Reading from the N-terminus, the 237-residue chain is Protein GrpE (237 aa).

Disordered stretches follow at residues 24-56 (LILE…KQLQ) and 204-237 (SAGS…PQPS).

The protein belongs to the GrpE family. In terms of assembly, homodimer.

It localises to the cytoplasm. Its function is as follows. Participates actively in the response to hyperosmotic and heat shock by preventing the aggregation of stress-denatured proteins, in association with DnaK and GrpE. It is the nucleotide exchange factor for DnaK and may function as a thermosensor. Unfolded proteins bind initially to DnaJ; upon interaction with the DnaJ-bound protein, DnaK hydrolyzes its bound ATP, resulting in the formation of a stable complex. GrpE releases ADP from DnaK; ATP binding to DnaK triggers the release of the substrate protein, thus completing the reaction cycle. Several rounds of ATP-dependent interactions between DnaJ, DnaK and GrpE are required for fully efficient folding. The protein is Protein GrpE of Synechococcus sp. (strain JA-2-3B'a(2-13)) (Cyanobacteria bacterium Yellowstone B-Prime).